A 1032-amino-acid polypeptide reads, in one-letter code: MEGARLQAVVTANIREFQRKMAAVNRIVRTTANRVTVTVDSRTEKFENAMNRLARITGSLSTVIGGALRGALMSAFPAAVPAAASLVGVVGSLGPMLGVAAGGAAGLGSAFATAGAGAVAYGALAATSIGGVIKASQDLDKLQAKLDDATDAKERAKIMEQIKNLQASLGKEERKALDTLEDFKSNWQDIAKSVQKPILRTFTTSLNTFKSVLNQLQPMFRGLARGGESLAKSMQNAFKAPDMKNFINYLNTEAPGAFVSFGKISGNIIRTVMNLMVAFGPLGKNMTKSIEGATAAWVKWSASLGSSVKFQKFIAYVQTNGPKLLKIIGNLSSGITSLFTGFAPLSADMMTSLVNLTARFKEWAASAKDSKEFKSFIDYIRTNGPIVWDSLGKIAKTLINLAVAMAPVGSEVLKMVNSFAQWTAATTKAHPEIGKFMAVAISLGGALRALTPVIISFQTLFGGFSSIGKAIDLIKKFKTSAAGIKLAAAIADMKLFTKTNALMAAQMAKTKFTNMITQLGLFGTKLRLQMSIMAAYLKQLVVAAAQQTAFAVKMAASYAQMKITSFITALKNGIIQMGLWIKNMAIMAAQSAANAVKMAAAWTAARISAFASMLAAGIKQMIAFGVRLAALAAAAAANAARMAASWVIAMGPIGWITAAVIALVALIIANWDKIKEYTVKIWGAVSKWLSDAWNKIKQAASVVWQALVTLIKKNFEMQKKIVTTVWNTIKSVSSKVWNGIKSFLSSVWNGIVNAGKTVWNGLKTFFTAWLNFQKKTWSTIWNAVKTAVTKVWKGIVSVGKTVWNGLKSFFTSWLNGQKKLFSTVWNAVKTAVTNVWNKLKSAASSTFNALKSSVTNIMNKVKDKIKSIWNSVMSFFKGINLGSIGRNIMQGLINGVTSMWGRVTSTFSRLTNAIPKTIKKILGIHSPSRLMRDEIGYHIGTGLVKGITGTEGMVTKAAASLAKSAVPEVPTVPELAVNSSYSGGMVEQSVNASLENFDLPEKNIIIQMDKREVGRAVEEPVREFTGRKRKRR.

The stretch at 131-178 forms a coiled coil; that stretch reads GVIKASQDLDKLQAKLDDATDAKERAKIMEQIKNLQASLGKEERKALD.

The protein resides in the virion. Its function is as follows. Serves as a base for tail tube protein polymerization and acts as a template for tail length determination. This is Tail tape measure protein gp18 from Bacillus phage SPP1 (Bacteriophage SPP1).